A 135-amino-acid chain; its full sequence is UPF0355 protein SAV0387 (135 aa).

This sequence belongs to the UPF0355 family.

The polypeptide is UPF0355 protein SAV0387 (Staphylococcus aureus (strain Mu50 / ATCC 700699)).